Consider the following 366-residue polypeptide: G-protein coupled receptor 183 (366 aa).

At 1–37 (MQVMRTFNQPPTSSHPTPTLNDSDTCITLYNHRGYAR) the chain is on the extracellular side. The N-linked (GlcNAc...) asparagine glycan is linked to Asn-21. Residues 38–63 (VLMPLFYCIVFFVGLLGNALAFHIIR) traverse the membrane as a helical segment. Residues 64 to 83 (PNVKKINSTTLYSANLVISD) are Cytoplasmic-facing. Residues 84–101 (ILFTLSLPLRIIYYALGF) traverse the membrane as a helical segment. At 102 to 111 (HWPLGETLCK) the chain is on the extracellular side. Cysteines 110 and 188 form a disulfide. The helical transmembrane segment at 112 to 133 (IVGLIFYINTYAGVNFMTCLSV) threads the bilayer. The Cytoplasmic segment spans residues 134–155 (DRFIAVVLPLRFARFRKVSNVR). The chain crosses the membrane as a helical span at residues 156–174 (YICVGVWLLVLMQTLPLLS). The Extracellular segment spans residues 175–199 (MPMTNEEPDGFITCMEYPNFEPVPN). The chain crosses the membrane as a helical span at residues 200–222 (ISYILIGAVFLGYGVPVVTILVC). The Cytoplasmic segment spans residues 223 to 248 (YSILCCKLRLAAKANQLTDKSGRSQK). Residues 249–272 (AIGVICCVSLVFVVCFSPYHIDLL) form a helical membrane-spanning segment. Residues 273–292 (QYMIRKLIYTPDCAELTAFQ) lie on the Extracellular side of the membrane. The chain crosses the membrane as a helical span at residues 293 to 317 (ISLHFTVCLMNLNSCLDPFIYFFAC). Topologically, residues 318–366 (KGYKTKVLKILKRQVSVSFSSAARTLPEGLSRDISDGNKIHLNSTRHKE) are cytoplasmic.

The protein belongs to the G-protein coupled receptor 1 family.

The protein resides in the cell membrane. G-protein coupled receptor expressed in lymphocytes that acts as a chemotactic receptor for B-cells, T-cells, splenic dendritic cells, monocytes/macrophages and astrocytes. Receptor for oxysterol 7-alpha,25-dihydroxycholesterol (7-alpha,25-OHC) and other related oxysterols. Mediates cell positioning and movement of a number of cells by binding the 7-alpha,25-OHC ligand that forms a chemotactic gradient. Binding of 7-alpha,25-OHC mediates the correct localization of B-cells during humoral immune responses. The chain is G-protein coupled receptor 183 (gpr183) from Salmo salar (Atlantic salmon).